Reading from the N-terminus, the 782-residue chain is Glucocorticoid receptor (782 aa).

The interval 1–20 (MDPKESLTPPSREEIPSSVL) is disordered. Positions 1 to 425 (MDPKESLTPP…SAATGPPPKL (425 aa)) are modulating. Thr-8 carries the post-translational modification Phosphothreonine. Arg-24 carries the post-translational modification Omega-N-methylarginine. Ser-46 carries the phosphoserine modification. The interval 48–79 (SLAAVSQPDSKQQRLAVDFPKGSGSNAQQPDL) is disordered. 6 positions are modified to phosphoserine: Ser-114, Ser-135, Ser-142, Ser-208, Ser-216, and Ser-231. Residues 130–184 (LSRSTSVPENPKSSASAAGPAAPAEKAFPKTHSDGAPEQPNVKGQTGTNGGNVKL) form a disordered region. A compositionally biased stretch (low complexity) spans 140 to 155 (PKSSASAAGPAAPAEK). Lys-263 is covalently cross-linked (Glycyl lysine isopeptide (Lys-Gly) (interchain with G-Cter in SUMO2)). Ser-272 bears the Phosphoserine mark. Glycyl lysine isopeptide (Lys-Gly) (interchain with G-Cter in SUMO); alternate cross-links involve residues Lys-282 and Lys-298. Glycyl lysine isopeptide (Lys-Gly) (interchain with G-Cter in SUMO2); alternate cross-links involve residues Lys-282 and Lys-298. Residues Ser-312 and Ser-410 each carry the phosphoserine modification. Lys-424 is covalently cross-linked (Glycyl lysine isopeptide (Lys-Gly) (interchain with G-Cter in ubiquitin)). 2 NR C4-type zinc fingers span residues 426 to 446 (CLVCSDEASGCHYGVLTCGSC) and 462 to 486 (CAGRNDCIIDKIRRKNCPACRYRKC). The segment at residues 426–491 (CLVCSDEASG…RYRKCLQAGM (66 aa)) is a DNA-binding region (nuclear receptor). An N6-acetyllysine mark is found at Lys-485, Lys-497, Lys-499, and Lys-500. Positions 490–782 (GMNLEARKTK…NIKKLLFHQK (293 aa)) are interaction with CLOCK. The interval 492–528 (NLEARKTKKKIKGIQQATTGVSQETSENSANKTIVPA) is hinge. The region spanning 529–763 (TLPQLTPTLV…FPEMLAEIIT (235 aa)) is the NR LBD domain. An interaction with CRY1 region spans residues 537-702 (LVSLLEVIEP…EIRMTYIKEL (166 aa)). Lys-708 is covalently cross-linked (Glycyl lysine isopeptide (Lys-Gly) (interchain with G-Cter in SUMO)).

Belongs to the nuclear hormone receptor family. NR3 subfamily. Heteromultimeric cytoplasmic complex with HSP90AA1, HSPA1A/HSPA1B, and FKBP5 or another immunophilin such as PPID, STIP1, or the immunophilin homolog PPP5C. Upon ligand binding FKBP5 dissociates from the complex and FKBP4 takes its place, thereby linking the complex to dynein and mediating transport to the nucleus, where the complex dissociates. Probably forms a complex composed of chaperones HSP90 and HSP70, co-chaperones CDC37, PPP5C, TSC1 and client protein TSC2, CDK4, AKT, RAF1 and NR3C1; this complex does not contain co-chaperones STIP1/HOP and PTGES3/p23. Directly interacts with UNC45A. Binds to DNA as a homodimer, and as heterodimer with NR3C2 or the retinoid X receptor. Binds STAT5A and STAT5B homodimers and heterodimers. Interacts with NRIP1, POU2F1, POU2F2 and TRIM28. Interacts with several coactivator complexes, including the SMARCA4 complex, CREBBP/EP300, TADA2L (Ada complex) and p160 coactivators such as NCOA2 and NCOA6. Interaction with BAG1 inhibits transactivation. Interacts with HEXIM1 and TGFB1I1. Interacts with NCOA1. Interacts with NCOA3, SMARCA4, SMARCC1, SMARCD1, and SMARCE1. Interacts with CLOCK, CRY1 and CRY2 in a ligand-dependent fashion. Interacts with CIART. Interacts with RWDD3. Interacts with UBE2I/UBC9 and this interaction is enhanced in the presence of RWDD3. Interacts with GRIP1. Interacts with NR4A3 (via nuclear receptor DNA-binding domain), represses transcription activity of NR4A3 on the POMC promoter Nur response element (NurRE). Directly interacts with PNRC2 to attract and form a complex with UPF1 and DCP1A; the interaction leads to rapid mRNA degradation. Interacts with GSK3B. Interacts with FNIP1 and FNIP2. Interacts (via C-terminus) with HNRNPU (via C-terminus). Interacts with MCM3AP. Interacts (via domain NR LBD) with HSP90AA1 and HSP90AB1. In the absence of hormonal ligand, interacts with TACC1. Interacts (via NR LBD domain) with ZNF764 (via KRAB domain); the interaction regulates transcription factor activity of NR3C1 by directing its actions toward certain biologic pathways. Post-translationally, acetylation by CLOCK reduces its binding to glucocorticoid response elements and its transcriptional activity. Increased proteasome-mediated degradation in response to glucocorticoids. In terms of processing, phosphorylated in the absence of hormone; becomes hyperphosphorylated in the presence of glucocorticoid. The Ser-208, Ser-231 and Ser-410-phosphorylated forms are mainly cytoplasmic, and the Ser-216-phosphorylated form is nuclear. Phosphorylation at Ser-216 increases transcriptional activity. Phosphorylation at Ser-208, Ser-231 and Ser-410 decreases signaling capacity. Phosphorylation at Ser-410 may protect from glucocorticoid-induced apoptosis. Phosphorylation at Ser-208 and Ser-216 is not required in regulation of chromosome segregation. May be dephosphorylated by PPP5C, attenuates NR3C1 action. Post-translationally, ubiquitinated by UBR5, leading to its degradation: UBR5 specifically recognizes and binds ligand-bound NR3C1 when it is not associated with coactivators (NCOAs). In presence of NCOAs, the UBR5-degron is not accessible, preventing its ubiquitination and degradation. Sumoylation at Lys-282 and Lys-298 negatively regulates its transcriptional activity. Sumoylation at Lys-708 positively regulates its transcriptional activity in the presence of RWDD3. Sumoylation at Lys-282 and Lys-298 is dispensable whereas sumoylation at Lys-708 is critical for the stimulatory effect of RWDD3 on its transcriptional activity. Heat shock increases sumoylation in a RWDD3-dependent manner.

Its subcellular location is the cytoplasm. The protein resides in the nucleus. It localises to the mitochondrion. The protein localises to the cytoskeleton. It is found in the spindle. Its subcellular location is the microtubule organizing center. The protein resides in the centrosome. It localises to the chromosome. The protein localises to the nucleoplasm. In terms of biological role, receptor for glucocorticoids (GC). Has a dual mode of action: as a transcription factor that binds to glucocorticoid response elements (GRE), both for nuclear and mitochondrial DNA, and as a modulator of other transcription factors. Affects inflammatory responses, cellular proliferation and differentiation in target tissues. Involved in chromatin remodeling. Plays a role in rapid mRNA degradation by binding to the 5' UTR of target mRNAs and interacting with PNRC2 in a ligand-dependent manner which recruits the RNA helicase UPF1 and the mRNA-decapping enzyme DCP1A, leading to RNA decay. Could act as a coactivator for STAT5-dependent transcription upon growth hormone (GH) stimulation and could reveal an essential role of hepatic GR in the control of body growth. Mediates glucocorticoid-induced apoptosis. Promotes accurate chromosome segregation during mitosis. May act as a tumor suppressor. May play a negative role in adipogenesis through the regulation of lipolytic and antilipogenic gene expression. This Sus scrofa (Pig) protein is Glucocorticoid receptor (NR3C1).